Reading from the N-terminus, the 86-residue chain is Arminin 7246 (86 aa).

A signal peptide spans Met-1 to Ala-18. Residues Arg-19–Ala-57 constitute a propeptide that is removed on maturation. Ala-83 is subject to Alanine amide.

The protein belongs to the arminin family. As to expression, expressed in entodermal epithelium along the body column.

Its subcellular location is the secreted. It is found in the target cell membrane. Functionally, antimicrobial peptide with a broad-spectrum antimicrobial activity. Keeps its antibacterial activity under a wide range of salt concentrations that mimic physiological conditions of human blood, which is surprising, since Hydra is an obligate freshwater animal with nearly no salt tolerance. Does not affect red blood cells. The sequence is that of Arminin 7246 from Hydra viridissima (Green hydra).